Consider the following 1113-residue polypeptide: Carbamoyl phosphate synthase arginine-specific large chain (1113 aa).

Residues 23 to 420 (QLIKGIDSVL…AFQKAFRQVD (398 aa)) form a carboxyphosphate synthetic domain region. Arg-150, Arg-190, Gly-196, Gly-197, Lys-227, Leu-229, Glu-234, Gly-260, Ile-261, His-262, Gln-303, and Glu-317 together coordinate ATP. An ATP-grasp 1 domain is found at 154-346 (ARALKEINMP…LAYTAAKIAL (193 aa)). The Mg(2+) site is built by Gln-303, Glu-317, and Asn-319. Mn(2+) contacts are provided by Gln-303, Glu-317, and Asn-319. The tract at residues 421 to 568 (PSLLGFQGSD…YVTYNAVKDD (148 aa)) is oligomerization domain. A carbamoyl phosphate synthetic domain region spans residues 569 to 955 (VTFGDNGIMV…SYWVALQGLM (387 aa)). Residues 693–888 (STILDTLGLD…FVEIAVKAFL (196 aa)) form the ATP-grasp 2 domain. ATP contacts are provided by Arg-729, Lys-768, Ile-770, Glu-775, Gly-800, Val-801, His-802, Ser-803, Gln-843, and Glu-859. The Mg(2+) site is built by Gln-843, Glu-859, and Asn-861. Residues Gln-843, Glu-859, and Asn-861 each coordinate Mn(2+). Positions 956 to 1097 (SFCVPLPPSG…EMRQSDGPET (142 aa)) are allosteric domain. An MGS-like domain is found at 957-1113 (FCVPLPPSGI…WREYLGFKPT (157 aa)).

The protein belongs to the CarB family. As to quaternary structure, heterodimer composed of 2 chains; the small (or glutamine) chain promotes the hydrolysis of glutamine to ammonia, which is used by the large (or ammonia) chain to synthesize carbamoyl phosphate. It depends on Mg(2+) as a cofactor. The cofactor is Mn(2+).

It is found in the cytoplasm. The enzyme catalyses hydrogencarbonate + L-glutamine + 2 ATP + H2O = carbamoyl phosphate + L-glutamate + 2 ADP + phosphate + 2 H(+). The catalysed reaction is hydrogencarbonate + NH4(+) + 2 ATP = carbamoyl phosphate + 2 ADP + phosphate + 2 H(+). It participates in amino-acid biosynthesis; L-arginine biosynthesis; carbamoyl phosphate from bicarbonate: step 1/1. In terms of biological role, large subunit of the arginine-specific carbamoyl phosphate synthase (CPSase). CPSase catalyzes the formation of carbamoyl phosphate from the ammonia moiety of glutamine, hydrogencarbonate, and phosphate donated by ATP, constituting the first step of 2 biosynthetic pathways, one leading to arginine and/or urea and the other to pyrimidine nucleotides. The large subunit (synthetase) binds the substrates ammonia (free or transferred from glutamine from the small subunit), hydrogencarbonate and ATP and carries out an ATP-coupled ligase reaction, activating hydrogencarbonate by forming carboxy phosphate which reacts with ammonia to form carbamoyl phosphate. This is Carbamoyl phosphate synthase arginine-specific large chain (CPA2) from Eremothecium gossypii (strain ATCC 10895 / CBS 109.51 / FGSC 9923 / NRRL Y-1056) (Yeast).